Consider the following 687-residue polypeptide: Amine oxidase [copper-containing] gamma 2 (687 aa).

An N-terminal signal peptide occupies residues 1–24; it reads MVELSFSQLLVLLLSLLFLFTTLA. An N-linked (GlcNAc...) asparagine glycan is attached at N154. Cysteines 169 and 191 form a disulfide. A glycan (N-linked (GlcNAc...) asparagine) is linked at N244. 333–344 lines the substrate pocket; that stretch reads YMDAGEFGLGPS. Catalysis depends on D335, which acts as the Proton acceptor. C354 and C380 are joined by a disulfide. A substrate-binding site is contributed by 420 to 425; sequence VGNYDY. Y423 (schiff-base intermediate with substrate; via topaquinone) is an active-site residue. Y423 carries the 2',4',5'-topaquinone modification. 2 residues coordinate Cu cation: H480 and H482. Mn(2+) contacts are provided by D489, M490, and D491. N497 and N598 each carry an N-linked (GlcNAc...) asparagine glycan. Residues D632 and I633 each contribute to the Mn(2+) site. Cu cation is bound at residue H643.

Belongs to the copper/topaquinone oxidase family. In terms of assembly, homodimer. Cu cation is required as a cofactor. Requires Zn(2+) as cofactor. The cofactor is L-topaquinone. It depends on Mn(2+) as a cofactor. Post-translationally, topaquinone (TPQ) is generated by copper-dependent autoxidation of a specific tyrosyl residue. Expressed in roots, leaves and cotyledons.

It localises to the secreted. Its subcellular location is the extracellular space. The protein resides in the apoplast. It catalyses the reaction a primary methyl amine + O2 + H2O = an aldehyde + H2O2 + NH4(+). It participates in amine and polyamine degradation; putrescine degradation. Its function is as follows. Copper amine oxidase that can use putrescine and spermidine as substrates. This Arabidopsis thaliana (Mouse-ear cress) protein is Amine oxidase [copper-containing] gamma 2.